Reading from the N-terminus, the 308-residue chain is Methionyl-tRNA formyltransferase (308 aa).

109 to 112 (SLLP) is a (6S)-5,6,7,8-tetrahydrofolate binding site.

Belongs to the Fmt family.

It carries out the reaction L-methionyl-tRNA(fMet) + (6R)-10-formyltetrahydrofolate = N-formyl-L-methionyl-tRNA(fMet) + (6S)-5,6,7,8-tetrahydrofolate + H(+). Its function is as follows. Attaches a formyl group to the free amino group of methionyl-tRNA(fMet). The formyl group appears to play a dual role in the initiator identity of N-formylmethionyl-tRNA by promoting its recognition by IF2 and preventing the misappropriation of this tRNA by the elongation apparatus. The chain is Methionyl-tRNA formyltransferase from Rhizorhabdus wittichii (strain DSM 6014 / CCUG 31198 / JCM 15750 / NBRC 105917 / EY 4224 / RW1) (Sphingomonas wittichii).